The primary structure comprises 451 residues: Probable phosphoglucosamine mutase (451 aa).

Catalysis depends on Ser96, which acts as the Phosphoserine intermediate. Mg(2+) contacts are provided by Ser96, Asp233, Asp235, and Asp237. Ser96 is modified (phosphoserine).

The protein belongs to the phosphohexose mutase family. Mg(2+) serves as cofactor. Activated by phosphorylation.

The enzyme catalyses alpha-D-glucosamine 1-phosphate = D-glucosamine 6-phosphate. Functionally, catalyzes the conversion of glucosamine-6-phosphate to glucosamine-1-phosphate. This chain is Probable phosphoglucosamine mutase, found in Pyrococcus horikoshii (strain ATCC 700860 / DSM 12428 / JCM 9974 / NBRC 100139 / OT-3).